The primary structure comprises 192 residues: Peptidyl-tRNA hydrolase (192 aa).

H17 lines the tRNA pocket. H22 (proton acceptor) is an active-site residue. TRNA is bound by residues F68, N70, and N116.

This sequence belongs to the PTH family. In terms of assembly, monomer.

It is found in the cytoplasm. The catalysed reaction is an N-acyl-L-alpha-aminoacyl-tRNA + H2O = an N-acyl-L-amino acid + a tRNA + H(+). Functionally, hydrolyzes ribosome-free peptidyl-tRNAs (with 1 or more amino acids incorporated), which drop off the ribosome during protein synthesis, or as a result of ribosome stalling. In terms of biological role, catalyzes the release of premature peptidyl moieties from peptidyl-tRNA molecules trapped in stalled 50S ribosomal subunits, and thus maintains levels of free tRNAs and 50S ribosomes. In Xylella fastidiosa (strain 9a5c), this protein is Peptidyl-tRNA hydrolase.